A 311-amino-acid polypeptide reads, in one-letter code: CD-NTase-associated protein 6 (311 aa).

ATP is bound by residues 84-89 (GSGKTE) and 215-216 (RR).

It belongs to the AAA ATPase family. As to quaternary structure, homohexamer. Forms a 1:1:6 CdnC:Cap7:Cap6 complex.

Its function is as follows. Regulates complex assembly in a CBASS antivirus system. CBASS (cyclic oligonucleotide-based antiphage signaling system) provides immunity against bacteriophage. The CD-NTase protein synthesizes cyclic nucleotides in response to infection; these serve as specific second messenger signals. The signals activate a diverse range of effectors, leading to bacterial cell death and thus abortive phage infection. A type III-C(AAA) CBASS system. Binds and disassembles an active CdnC:Cap7 (Cap7 is also called HORMA) complex, inhibiting the complex's ability to synthesize cyclic nucleotide second messengers. An AAA+-ATPase remodeler, in the absence of foreign threat Cap6 (also called Trip13) probably maintains the Cap7 protein in its open, inactive state. Once activated (presumably by a bacteriophage protein) Cap7 binds to and activates its cognate CD-NTase (CdnC in this bacteria) to synthesize cAAA, a cyclic nucleotide second messenger. cAAA activates the NucC endonuclease which degrades all DNA in the infected cell, causing cell death and abortive phage infection. In terms of biological role, protects E.coli strain JP313 against bacteriophage lambda cI- infection. When the cdnC-cap7-cap6-nucC operon is transformed into a susceptible E.coli strain it confers bacteriophage lambda cI- immunity. Mutations in the sensor (Cap7 also called HORMA) or effector proteins (CdnC, NucC) but not the disassembly protein (Cap6 also called Trip13) no longer confer immunity. The presence of the intact operon leads to culture collapse and cell death, which occurs before the phage has finished its replication cycle, thus protecting non-infected bacteria by aborting the phage infection and preventing its propagation. The polypeptide is CD-NTase-associated protein 6 (Escherichia coli (strain MS 115-1)).